A 338-amino-acid chain; its full sequence is Large ribosomal subunit protein uL10 (338 aa).

A disordered region spans residues 302–338 (IAAQPQPAEEAEEKVEEEEEEEKEEEEALAGLGALFG). Acidic residues predominate over residues 310 to 329 (EEAEEKVEEEEEEEKEEEEA).

Belongs to the universal ribosomal protein uL10 family. As to quaternary structure, part of the 50S ribosomal subunit. Forms part of the ribosomal stalk which helps the ribosome interact with GTP-bound translation factors. Forms a heptameric L10(L12)2(L12)2(L12)2 complex, where L10 forms an elongated spine to which the L12 dimers bind in a sequential fashion.

In terms of biological role, forms part of the ribosomal stalk, playing a central role in the interaction of the ribosome with GTP-bound translation factors. The sequence is that of Large ribosomal subunit protein uL10 from Thermococcus sibiricus (strain DSM 12597 / MM 739).